The primary structure comprises 219 residues: Elongation factor Ts, chloroplastic (219 aa).

Belongs to the EF-Ts family.

It localises to the plastid. The protein localises to the chloroplast. Functionally, associates with the EF-Tu.GDP complex and induces the exchange of GDP to GTP. It remains bound to the aminoacyl-tRNA.EF-Tu.GTP complex up to the GTP hydrolysis stage on the ribosome. This chain is Elongation factor Ts, chloroplastic (tsf), found in Rhodomonas salina (Cryptomonas salina).